The sequence spans 322 residues: HPr kinase/phosphorylase (322 aa).

Residues His-146 and Lys-167 contribute to the active site. 161 to 168 (GDSGLGKS) contacts ATP. Position 168 (Ser-168) interacts with Mg(2+). Asp-185 acts as the Proton acceptor; for phosphorylation activity. Proton donor; for dephosphorylation activity in catalysis. Residues 209–218 (LEVRGLGLLD) are important for the catalytic mechanism of both phosphorylation and dephosphorylation. Mg(2+) is bound at residue Glu-210. Arg-250 is a catalytic residue. The segment at 271-276 (QVAAGR) is important for the catalytic mechanism of dephosphorylation.

This sequence belongs to the HPrK/P family. As to quaternary structure, homohexamer. Mg(2+) serves as cofactor.

The enzyme catalyses [HPr protein]-L-serine + ATP = [HPr protein]-O-phospho-L-serine + ADP + H(+). It carries out the reaction [HPr protein]-O-phospho-L-serine + phosphate + H(+) = [HPr protein]-L-serine + diphosphate. Catalyzes the ATP- as well as the pyrophosphate-dependent phosphorylation of a specific serine residue in HPr, a phosphocarrier protein of the phosphoenolpyruvate-dependent sugar phosphotransferase system (PTS). HprK/P also catalyzes the pyrophosphate-producing, inorganic phosphate-dependent dephosphorylation (phosphorolysis) of seryl-phosphorylated HPr (P-Ser-HPr). The chain is HPr kinase/phosphorylase from Burkholderia mallei (strain NCTC 10247).